Consider the following 129-residue polypeptide: UPF0212 protein Mbar_A2902 (129 aa).

Belongs to the UPF0212 family.

The chain is UPF0212 protein Mbar_A2902 from Methanosarcina barkeri (strain Fusaro / DSM 804).